A 214-amino-acid polypeptide reads, in one-letter code: Adenylate kinase (214 aa).

ATP is bound at residue 10 to 15 (GAGKGT). The interval 30–59 (STGDMLRAAVKAGTPLGLEAKKVMDAGQLV) is NMP. AMP contacts are provided by residues T31, R36, 57–59 (QLV), 85–88 (GFPR), and Q92. The tract at residues 122-159 (GRRVHPGSGRVYHIVFNQPKVEGKDDVTGEDLAIRPDD) is LID. Residues R123 and 132–133 (VY) contribute to the ATP site. The AMP site is built by R156 and R167. Q200 lines the ATP pocket.

The protein belongs to the adenylate kinase family. In terms of assembly, monomer.

Its subcellular location is the cytoplasm. The enzyme catalyses AMP + ATP = 2 ADP. It participates in purine metabolism; AMP biosynthesis via salvage pathway; AMP from ADP: step 1/1. Catalyzes the reversible transfer of the terminal phosphate group between ATP and AMP. Plays an important role in cellular energy homeostasis and in adenine nucleotide metabolism. The protein is Adenylate kinase of Shewanella woodyi (strain ATCC 51908 / MS32).